The following is a 125-amino-acid chain: Snaclec B7 (125 aa).

3 disulfides stabilise this stretch: Cys-2-Cys-13, Cys-30-Cys-119, and Cys-96-Cys-111. Residues 9-120 (HEGHCYKVFK…CNISQYFVCQ (112 aa)) enclose the C-type lectin domain. An N-linked (GlcNAc...) asparagine glycan is attached at Asn-112.

This sequence belongs to the snaclec family. Heterodimer; disulfide-linked. As to expression, expressed by the venom gland.

It is found in the secreted. Interferes with one step of hemostasis (modulation of platelet aggregation, or coagulation cascade, for example). The sequence is that of Snaclec B7 from Macrovipera lebetinus (Levantine viper).